A 249-amino-acid chain; its full sequence is MTVLSCSINTLIKEGLYEISGVEVGQHFYWQIGGFQVHAQVLITSWVVIAILLGSAVLAVRNPQTIPTDGQNFFEFVLEFIRDVSQTQIGEEYGPWVPFIGTLFLFIFVSNWSGALLPWKIIQLPQGELAAPTNDINTTVALALLTSVAYFYAGLSKKGLGYFSKYIQPTPILLPINILEDFTKPLSLSFRLFGNILADELVVVVLVSLVPLVVPIPVMFLGLFTSGIQALIFATLAAAYIGESMEGHH.

The next 5 membrane-spanning stretches (helical) occupy residues 40-60 (QVLI…VLAV), 97-117 (VPFI…GALL), 136-156 (INTT…AGLS), 201-221 (LVVV…VMFL), and 222-242 (GLFT…AYIG).

This sequence belongs to the ATPase A chain family. In terms of assembly, F-type ATPases have 2 components, CF(1) - the catalytic core - and CF(0) - the membrane proton channel. CF(1) has five subunits: alpha(3), beta(3), gamma(1), delta(1), epsilon(1). CF(0) has four main subunits: a, b, b' and c.

Its subcellular location is the plastid. The protein localises to the chloroplast thylakoid membrane. Its function is as follows. Key component of the proton channel; it plays a direct role in the translocation of protons across the membrane. The sequence is that of ATP synthase subunit a, chloroplastic from Draba nemorosa (Woodland whitlowgrass).